We begin with the raw amino-acid sequence, 727 residues long: Non-structural protein 4 (727 aa).

Disordered stretches follow at residues 1-38 (MNQSRSFVTGRGRDLSRTPSALSSNSETPGSMSSPSEG) and 671-727 (GNSM…KLSK). Positions 17 to 38 (RTPSALSSNSETPGSMSSPSEG) are enriched in polar residues. Residues 712–727 (SRRKARKARAASKLSK) show a composition bias toward basic residues.

This Rice dwarf virus (isolate Fujian) (RDV) protein is Non-structural protein 4.